An 802-amino-acid chain; its full sequence is Probable inactive leucine-rich repeat receptor-like protein kinase At3g03770 (802 aa).

A signal peptide spans methionine 1–leucine 26. Residues glutamine 27–alanine 391 lie on the Extracellular side of the membrane. N-linked (GlcNAc...) asparagine glycans are attached at residues asparagine 52 and asparagine 83. 11 LRR repeats span residues glutamate 71 to isoleucine 94, leucine 104 to leucine 128, serine 129 to leucine 152, alanine 153 to leucine 176, proline 177 to leucine 200, serine 201 to asparagine 225, glutamine 227 to serine 244, asparagine 245 to serine 268, leucine 269 to leucine 293, proline 294 to asparagine 317, and glutamine 319 to serine 341. Asparagine 135 carries an N-linked (GlcNAc...) asparagine glycan. A glycan (N-linked (GlcNAc...) asparagine) is linked at asparagine 190. Asparagine 300 and asparagine 313 each carry an N-linked (GlcNAc...) asparagine glycan. A helical transmembrane segment spans residues leucine 392–leucine 412. Residues arginine 413 to arginine 802 lie on the Cytoplasmic side of the membrane. One can recognise a Protein kinase domain in the interval phenylalanine 477–leucine 759. The interval asparagine 761–arginine 802 is disordered. A compositionally biased stretch (low complexity) spans serine 762 to serine 777. Residues serine 791–arginine 802 show a composition bias toward basic and acidic residues.

This sequence belongs to the protein kinase superfamily. Ser/Thr protein kinase family.

The protein localises to the cell membrane. The protein is Probable inactive leucine-rich repeat receptor-like protein kinase At3g03770 of Arabidopsis thaliana (Mouse-ear cress).